The primary structure comprises 320 residues: NAD kinase (320 aa).

Aspartate 96 (proton acceptor) is an active-site residue. Residues 96–97 (DG), arginine 101, 170–171 (NE), aspartate 200, and 211–216 (TAYAFS) each bind NAD(+).

It belongs to the NAD kinase family. A divalent metal cation serves as cofactor.

Its subcellular location is the cytoplasm. The enzyme catalyses NAD(+) + ATP = ADP + NADP(+) + H(+). Its function is as follows. Involved in the regulation of the intracellular balance of NAD and NADP, and is a key enzyme in the biosynthesis of NADP. Catalyzes specifically the phosphorylation on 2'-hydroxyl of the adenosine moiety of NAD to yield NADP. This Rhodococcus opacus (strain B4) protein is NAD kinase.